The primary structure comprises 213 residues: Insulin-like peptide INSL6 (213 aa).

The N-terminal stretch at 1–20 (MPRLLRLSLLWLGLLLVRFS) is a signal peptide. 3 disulfides stabilise this stretch: Cys-33–Cys-179, Cys-45–Cys-192, and Cys-178–Cys-183. A propeptide spans 55-168 (FEEETPFSRL…SNLFWGHHPQ (114 aa)) (connecting peptide). Residues 201-213 (LKEKRSSLVTKIY) constitute a propeptide that is removed on maturation.

Belongs to the insulin family. In terms of tissue distribution, testis specific.

It localises to the secreted. Its function is as follows. May have a role in sperm development and fertilization. In Homo sapiens (Human), this protein is Insulin-like peptide INSL6 (INSL6).